Consider the following 240-residue polypeptide: Arylmalonate decarboxylase (240 aa).

The catalysed reaction is 2-aryl-2-methylmalonate + H(+) = 2-arylpropionate + CO2. In Bordetella bronchiseptica (Alcaligenes bronchisepticus), this protein is Arylmalonate decarboxylase.